The sequence spans 581 residues: Serine/threonine-protein kinase PINK1, mitochondrial (581 aa).

Residues 1-77 (MAVRQALGRG…RFFRQSVAGL (77 aa)) constitute a mitochondrion transit peptide. The Mitochondrial intermembrane segment spans residues 78–93 (AARLQRQFVVRAWGCA). The chain crosses the membrane as a helical span at residues 94–110 (GPCGRAVFLAFGLGLGL). Positions 111-117 (IEEKQAE) are required for outer membrane localization. Over 111 to 581 (IEEKQAESRR…LLLCSWRAAL (471 aa)) the chain is Cytoplasmic. The Protein kinase domain occupies 156-511 (YLIGQSIGKG…VAANVLHLSL (356 aa)). ATP contacts are provided by residues 162–170 (IGKGCSAAV) and lysine 186. Residues 189-208 (GLLPGRGPGTSAPGEGQERA) are disordered. The residue at position 228 (serine 228) is a Phosphoserine; by autocatalysis. Aspartate 362 (proton acceptor) is an active-site residue. At serine 402 the chain carries Phosphoserine; by autocatalysis.

Belongs to the protein kinase superfamily. Ser/Thr protein kinase family. In terms of assembly, upon mitochondrial depolarization, it forms a supercomplex with TOM and TIM23 complexes. PINK1-TOM-TIM23 supercomplex formation requires PINK1 interaction with TOMM20 and TOMM70 and is critical for PINK1 stabilization at the outer mitochondrial membrane, kinase activation and downstream mitophagy. Upon mitochondrial depolarization, interacts with TIMM23; the interaction is required for PINK1 accumulation at the outer mitochondrial membrane, kinase activation by autophosphorylation and PRKN recruitement to mitochondria. Interacts with PRKN. Interacts with FBXO7. Forms a complex with PRKN and PARK7. Interacts with NENF. Requires Mg(2+) as cofactor. In terms of processing, proteolytically cleaved. In healthy cells, the precursor is continuously imported into the inner mitochondrial membrane (IMM), where it is proteolytically cleaved by mitochondrial-processing peptidase (MPP) and then undergoes further proteolytic cleavage by PARL or AFG3L2 to give rise to the 52 kDa short form. The 52 kDa short form is then released into the cytosol where it rapidly undergoes proteasome-dependent degradation. In unhealthy cells, when cellular stress conditions lead to the loss of mitochondrial membrane potential, mitochondrial import is impaired leading to the precursor accumulating on the outer mitochondrial membrane (OMM). If accumulation at the OMM fails and it is imported into the depolarized mitochondria, it undergoes cleavage by the IMM protease OMA1, promoting its subsequent degradation by the proteasome. Post-translationally, autophosphorylated. Loss of mitochondrial membrane potential results in the precursor accumulating on the outer mitochondrial membrane (OMM) where it is activated by autophosphorylation. Autophosphorylation at Ser-228 and Ser-402 is sufficient and essential for selective recruitment of PRKN to depolarized mitochondria, via PINK1-dependent phosphorylation of ubiquitin and maybe PRKN. In terms of tissue distribution, highly expressed in heart, skeletal muscle and testis, and at lower levels in brain, placenta, liver, kidney, pancreas, prostate, ovary and small intestine. Present in the embryonic testis from an early stage of development.

The protein localises to the mitochondrion outer membrane. Its subcellular location is the mitochondrion inner membrane. It localises to the cytoplasm. The protein resides in the cytosol. It catalyses the reaction L-seryl-[protein] + ATP = O-phospho-L-seryl-[protein] + ADP + H(+). The catalysed reaction is L-threonyl-[protein] + ATP = O-phospho-L-threonyl-[protein] + ADP + H(+). Its function is as follows. Serine/threonine-protein kinase which acts as a sensor of mitochondrial damage and protects against mitochondrial dysfunction during cellular stress. It phosphorylates mitochondrial proteins to coordinate mitochondrial quality control mechanisms that remove and replace dysfunctional mitochondrial components. Depending on the severity of mitochondrial damage, activity ranges from preventing apoptosis and stimulating mitochondrial biogenesis to eliminating severely damaged mitochondria via PINK1-PRKN-dependent mitophagy. When cellular stress results in irreversible mitochondrial damage, PINK1 accumulates at the outer mitochondrial membrane (OMM) where it phosphorylates pre-existing polyubiquitin chains at 'Ser-65', recruits PRKN from the cytosol to the OMM and activates PRKN by phosphorylation at 'Ser-65'; activated PRKN then ubiquinates VDAC1 and other OMM proteins to initiate mitophagy. The PINK1-PRKN pathway also promotes fission of damaged mitochondria through phosphorylation and PRKN-dependent degradation of mitochondrial proteins involved in fission such as MFN2. This prevents the refusion of unhealthy mitochondria with the mitochondrial network or initiates mitochondrial fragmentation facilitating their later engulfment by autophagosomes. Also promotes mitochondrial fission independently of PRKN and ATG7-mediated mitophagy, via the phosphorylation and activation of DNM1L. Regulates motility of damaged mitochondria by promoting the ubiquitination and subsequent degradation of MIRO1 and MIRO2; in motor neurons, this likely inhibits mitochondrial intracellular anterograde transport along the axons which probably increases the chance of the mitochondria undergoing mitophagy in the soma. Required for ubiquinone reduction by mitochondrial complex I by mediating phosphorylation of complex I subunit NDUFA10. Phosphorylates LETM1, positively regulating its mitochondrial calcium transport activity. The sequence is that of Serine/threonine-protein kinase PINK1, mitochondrial (PINK1) from Homo sapiens (Human).